We begin with the raw amino-acid sequence, 158 residues long: 6,7-dimethyl-8-ribityllumazine synthase (158 aa).

Residues Phe-22, 57–59 (AVE), and 81–83 (AVI) each bind 5-amino-6-(D-ribitylamino)uracil. 86–87 (GT) is a binding site for (2S)-2-hydroxy-3-oxobutyl phosphate. His-89 acts as the Proton donor in catalysis. Residue Phe-114 participates in 5-amino-6-(D-ribitylamino)uracil binding. Arg-128 contacts (2S)-2-hydroxy-3-oxobutyl phosphate.

This sequence belongs to the DMRL synthase family. In terms of assembly, forms an icosahedral capsid composed of 60 subunits, arranged as a dodecamer of pentamers.

The enzyme catalyses (2S)-2-hydroxy-3-oxobutyl phosphate + 5-amino-6-(D-ribitylamino)uracil = 6,7-dimethyl-8-(1-D-ribityl)lumazine + phosphate + 2 H2O + H(+). The protein operates within cofactor biosynthesis; riboflavin biosynthesis; riboflavin from 2-hydroxy-3-oxobutyl phosphate and 5-amino-6-(D-ribitylamino)uracil: step 1/2. Catalyzes the formation of 6,7-dimethyl-8-ribityllumazine by condensation of 5-amino-6-(D-ribitylamino)uracil with 3,4-dihydroxy-2-butanone 4-phosphate. This is the penultimate step in the biosynthesis of riboflavin. The sequence is that of 6,7-dimethyl-8-ribityllumazine synthase from Shewanella oneidensis (strain ATCC 700550 / JCM 31522 / CIP 106686 / LMG 19005 / NCIMB 14063 / MR-1).